A 103-amino-acid polypeptide reads, in one-letter code: Protamine-2 (103 aa).

A disordered region spans residues 1-103 (MVRYRMRSLS…RTRRRRCRRY (103 aa)). Phosphoserine is present on residues S8 and S10. Over residues 8 to 17 (SLSERPHEVH) the composition is skewed to basic and acidic residues. A compositionally biased stretch (low complexity) spans 23-35 (GQEQGHNGQEEQG). A Phosphoserine modification is found at S37. Over residues 39–48 (EHVEVYERTH) the composition is skewed to basic and acidic residues. Positions 51–103 (YSHHRRRRCSRRRLYRIHRRRHRSCRRRRRRSCRHRRRHRRGCRTRRRRCRRY) are enriched in basic residues.

This sequence belongs to the protamine P2 family. In terms of assembly, interacts with TDRP. Post-translationally, proteolytic processing into mature chains is required for histone eviction during spermatogenesis. Transition proteins (TNP1 and TNP2) are required for processing. As to expression, testis.

Its subcellular location is the nucleus. The protein localises to the chromosome. Functionally, protamines substitute for histones in the chromatin of sperm during the haploid phase of spermatogenesis. They compact sperm DNA into a highly condensed, stable and inactive complex. The polypeptide is Protamine-2 (PRM2) (Semnopithecus entellus (Northern plains gray langur)).